The following is a 440-amino-acid chain: Tubby-like F-box protein 13 (440 aa).

The 56-residue stretch at 51 to 106 (SCWASLPPELLRDIIERLEESEATWPSRKHVVACAGVCRTWREMCKEIVKNPELCG) folds into the F-box domain.

This sequence belongs to the TUB family. As to expression, ubiquitous.

In Oryza sativa subsp. japonica (Rice), this protein is Tubby-like F-box protein 13 (TULP13).